Here is a 551-residue protein sequence, read N- to C-terminus: Nicotianamine aminotransferase B (551 aa).

The segment at 24 to 127 is disordered; that stretch reads KSNGHGVAAA…GHAAAAAEEE (104 aa). Residues 86 to 96 show a composition bias toward basic and acidic residues; it reads GHRESNGHAEA. The span at 111-123 shows a compositional bias: low complexity; sequence AANGESNGHAAAA. At K379 the chain carries N6-(pyridoxal phosphate)lysine.

The protein belongs to the class-I pyridoxal-phosphate-dependent aminotransferase family. The cofactor is pyridoxal 5'-phosphate. In terms of tissue distribution, expressed in roots, but not in leaves.

It catalyses the reaction nicotianamine + 2-oxoglutarate = 3''-deamino-3''-oxonicotianamine + L-glutamate. Functionally, involved in biosynthesis of mugineic acid family phytosiderophores. This is Nicotianamine aminotransferase B from Hordeum vulgare (Barley).